We begin with the raw amino-acid sequence, 171 residues long: UPF0398 protein STER_0279 (171 aa).

The protein belongs to the UPF0398 family.

The polypeptide is UPF0398 protein STER_0279 (Streptococcus thermophilus (strain ATCC BAA-491 / LMD-9)).